The chain runs to 99 residues: Putative septation protein SpoVG (99 aa).

It belongs to the SpoVG family.

Functionally, could be involved in septation. The chain is Putative septation protein SpoVG from Onion yellows phytoplasma (strain OY-M).